We begin with the raw amino-acid sequence, 584 residues long: Transcription factor COE1 (584 aa).

Position 1 is an N-acetylmethionine (methionine 1). The segment covering 1 to 14 (MFGIQESIQRSGSS) has biased composition (polar residues). A disordered region spans residues 1-21 (MFGIQESIQRSGSSMKEEPLG). Lysine 16 participates in a covalent cross-link: Glycyl lysine isopeptide (Lys-Gly) (interchain with G-Cter in SUMO1); alternate. A Glycyl lysine isopeptide (Lys-Gly) (interchain with G-Cter in SUMO2); alternate cross-link involves residue lysine 16. An interaction with DNA region spans residues 63 to 66 (RKSN). The C5-type zinc-finger motif lies at 151–170 (CRVLLTHEIMCSRCCDKKSC). 2 interaction with DNA regions span residues 197–204 (NCLKNAGN) and 236–239 (NNSK). In terms of domain architecture, IPT/TIG spans 255–338 (PCIKAISPSE…KGTPGRFIYT (84 aa)). A disordered region spans residues 450-473 (GFTRNSSSVSPHGYVPSTTPQQTN).

The protein belongs to the COE family. In terms of assembly, homodimer. Interacts with ZNF423 and ZNF521, leading to prevent EBF1 to bind DNA and activate target genes. Interacts with CCR4-NOT component CNOT3. Expressed exclusively in olfactory receptor neurons and their precursors.

The protein resides in the nucleus. Its function is as follows. Key pioneer transcription factor of B-cell specification and commitment. Recognizes variations of the palindromic sequence 5'-ATTCCCNNGGGAATT-3'. Operates in a transcription factor network to activate B-cell-specific genes and repress genes associated with alternative cell fates. For instance, positively regulates many B-cell specific genes including BCR or CD40 while repressing genes that direct cells into alternative lineages, including GATA3 and TCF7 for the T-cell lineage. In addition to its role during lymphopoiesis, controls the thermogenic gene program in adipocytes during development and in response to environmental cold. The protein is Transcription factor COE1 (Ebf1) of Rattus norvegicus (Rat).